Here is a 629-residue protein sequence, read N- to C-terminus: Plastin-1 (629 aa).

Met-1 is modified (N-acetylmethionine). EF-hand domains follow at residues 11-46 and 51-86; these read EELE…ASLP and KVRE…LKSK. The Ca(2+) site is built by Asp-24, Asp-26, Ser-28, Tyr-30, Glu-35, Asp-64, Asn-66, Asp-68, Lys-70, and Glu-75. Actin-binding stretches follow at residues 108–380 and 381–625; these read TSTI…CLHK and PNNN…GKGL. Calponin-homology (CH) domains are found at residues 122-238, 266-376, 395-504, and 516-625; these read EEEK…KVGL, LSPE…NTYP, SKEE…RRYT, and KVND…GKGL.

In terms of assembly, monomer. Phosphorylated. In terms of tissue distribution, in small intestine, colon, and kidney; relatively lower levels of expression are detected in the lung and stomach.

The protein localises to the cytoplasm. The protein resides in the cell projection. It localises to the stereocilium. Functionally, actin-bundling protein. In the inner ear, it is required for stereocilia formation. Mediates liquid packing of actin filaments that is necessary for stereocilia to grow to their proper dimensions. In Homo sapiens (Human), this protein is Plastin-1 (PLS1).